We begin with the raw amino-acid sequence, 483 residues long: Regulatory protein ViaA (483 aa).

It belongs to the ViaA family. As to quaternary structure, homodimer. Interacts with RavA.

It localises to the cytoplasm. Functionally, component of the RavA-ViaA chaperone complex, which may act on the membrane to optimize the function of some of the respiratory chains. ViaA stimulates the ATPase activity of RavA. The protein is Regulatory protein ViaA of Escherichia coli O139:H28 (strain E24377A / ETEC).